Here is a 376-residue protein sequence, read N- to C-terminus: Cellular tumor antigen p53 (376 aa).

The tract at residues 1-36 is transcription activation (acidic); that stretch reads MEGNGERDTMMVEPPDSQEFAELWLRNLIVRDNSLW. Residues 77 to 268 mediate DNA binding; the sequence is DYPGLLNFTL…KTEESNFKKQ (192 aa). Residues 150–159 are compositionally biased toward basic and acidic residues; that stretch reads RCPHHERSND. The tract at residues 150–171 is disordered; sequence RCPHHERSNDSSDGPAPPGHLL. Cysteine 151, histidine 154, cysteine 214, and cysteine 218 together coordinate Zn(2+). Residues 249 to 256 are interaction with DNA; it reads RVCACPGR. 2 stretches are compositionally biased toward basic and acidic residues: residues 257-270 and 282-294; these read DRKT…KQQE and SMKD…EASK. A disordered region spans residues 257-306; that stretch reads DRKTEESNFKKQQEPKTSGKTLTKRSMKDPPSHPEASKKSKNSSSDDEIY. The Bipartite nuclear localization signal motif lies at 280-297; sequence KRSMKDPPSHPEASKKSK. The tract at residues 303-334 is oligomerization; it reads DEIYTLQVRGKERYEFLKKINDGLELSDVVPP. The short motif at 317-328 is the Nuclear export signal element; it reads EFLKKINDGLEL. A disordered region spans residues 342-376; that stretch reads QKLLSKTCRKERDGAAGEPKRGKKRLVKEEKCDSD. The tract at residues 347 to 372 is basic (repression of DNA-binding); it reads KTCRKERDGAAGEPKRGKKRLVKEEK. Residues 349 to 361 are compositionally biased toward basic and acidic residues; that stretch reads CRKERDGAAGEPK.

Belongs to the p53 family. In terms of assembly, binds DNA as a homotetramer. It depends on Zn(2+) as a cofactor.

The protein localises to the cytoplasm. Its subcellular location is the nucleus. Functionally, multifunctional transcription factor that induces cell cycle arrest, DNA repair or apoptosis upon binding to its target DNA sequence. Acts as a tumor suppressor in many tumor types; induces growth arrest or apoptosis depending on the physiological circumstances and cell type. Negatively regulates cell division by controlling expression of a set of genes required for this process. One of the activated genes is an inhibitor of cyclin-dependent kinases. Apoptosis induction seems to be mediated either by stimulation of BAX and FAS antigen expression, or by repression of Bcl-2 expression. The polypeptide is Cellular tumor antigen p53 (tp53) (Ictalurus punctatus (Channel catfish)).